We begin with the raw amino-acid sequence, 182 residues long: Ribosome-recycling factor (182 aa).

The protein belongs to the RRF family.

The protein localises to the cytoplasm. In terms of biological role, responsible for the release of ribosomes from messenger RNA at the termination of protein biosynthesis. May increase the efficiency of translation by recycling ribosomes from one round of translation to another. In Prochlorococcus marinus (strain SARG / CCMP1375 / SS120), this protein is Ribosome-recycling factor.